The following is a 382-amino-acid chain: Lipid-A-disaccharide synthase (382 aa).

The protein belongs to the LpxB family.

It catalyses the reaction 2-N,3-O-bis[(3R)-3-hydroxytetradecanoyl]-alpha-D-glucosaminyl 1-phosphate + UDP-2-N,3-O-bis[(3R)-3-hydroxytetradecanoyl]-alpha-D-glucosamine = lipid A disaccharide (E. coli) + UDP + H(+). The enzyme catalyses a lipid X + a UDP-2-N,3-O-bis[(3R)-3-hydroxyacyl]-alpha-D-glucosamine = a lipid A disaccharide + UDP + H(+). It functions in the pathway glycolipid biosynthesis; lipid IV(A) biosynthesis; lipid IV(A) from (3R)-3-hydroxytetradecanoyl-[acyl-carrier-protein] and UDP-N-acetyl-alpha-D-glucosamine: step 5/6. Condensation of UDP-2,3-diacylglucosamine and 2,3-diacylglucosamine-1-phosphate to form lipid A disaccharide, a precursor of lipid A, a phosphorylated glycolipid that anchors the lipopolysaccharide to the outer membrane of the cell. The sequence is that of Lipid-A-disaccharide synthase from Serratia proteamaculans (strain 568).